Here is a 299-residue protein sequence, read N- to C-terminus: Cell division control protein 16 (299 aa).

The Rab-GAP TBC domain maps to 41–223 (GGNSSTRPYV…TIWDFLFAYG (183 aa)).

Belongs to the BUB2 family.

The protein localises to the cytoplasm. Its subcellular location is the cytoskeleton. It localises to the microtubule organizing center. It is found in the spindle pole body. Has a dual role in the cell cycle. In mitosis, it is involved in maintenance of cdc2 kinase activity. It is subsequently required for regulation of septum formation. Could be involved in maintenance of cdc2 kinase activity by preventing, directly or indirectly, the degradation of cyclin or the dephosphorylation of 'Thr-167' of cdc2. This Schizosaccharomyces pombe (strain 972 / ATCC 24843) (Fission yeast) protein is Cell division control protein 16 (cdc16).